A 436-amino-acid chain; its full sequence is Acetyl-CoA decarbonylase/synthase complex subunit delta (436 aa).

It belongs to the CdhD family. In terms of assembly, heterodimer of delta and gamma chains. The ACDS complex is made up of alpha, epsilon, beta, gamma and delta chains with a probable stoichiometry of (alpha(2)epsilon(2))(4)-beta(8)-(gamma(1)delta(1))(8).

Its pathway is one-carbon metabolism; methanogenesis from acetate. Part of a complex that catalyzes the reversible cleavage of acetyl-CoA, allowing growth on acetate as sole source of carbon and energy. Probably maintains the overall quaternary structure of the ACDS complex. In Methanosarcina mazei (strain ATCC BAA-159 / DSM 3647 / Goe1 / Go1 / JCM 11833 / OCM 88) (Methanosarcina frisia), this protein is Acetyl-CoA decarbonylase/synthase complex subunit delta.